Reading from the N-terminus, the 1006-residue chain is DNA polymerase (1006 aa).

This sequence belongs to the DNA polymerase type-B family. In terms of assembly, interacts with OPG148. Component of the Uracil-DNA glycosylase(UDG)-OPG148-polymerase complex; OPG148 and OPG116/UDG form a heterodimeric processivity factor that associates with OPG071 to form the processive polymerase holoenzyme.

It carries out the reaction DNA(n) + a 2'-deoxyribonucleoside 5'-triphosphate = DNA(n+1) + diphosphate. Its function is as follows. Catalyzes DNA synthesis. Acquires processivity by associating with a heterodimeric processivity factor comprised of the viral OPG148 and OPG116 proteins, thereby forming the DNA polymerase holoenzyme. Displays 3'- to 5' exonuclease activity. Might participate in viral DNA recombination. Does not perform OPG116/D4synthesis across an abasic site. This chain is DNA polymerase (OPG071), found in Homo sapiens (Human).